We begin with the raw amino-acid sequence, 453 residues long: Signal recognition particle protein (453 aa).

Residues 107–114 (GLQGAGKT), 190–194 (DTAGR), and 248–251 (TKVD) each bind GTP.

This sequence belongs to the GTP-binding SRP family. SRP54 subfamily. Part of the signal recognition particle protein translocation system, which is composed of SRP and FtsY. SRP is a ribonucleoprotein composed of Ffh and a 4.5S RNA molecule.

It is found in the cytoplasm. It carries out the reaction GTP + H2O = GDP + phosphate + H(+). Functionally, involved in targeting and insertion of nascent membrane proteins into the cytoplasmic membrane. Binds to the hydrophobic signal sequence of the ribosome-nascent chain (RNC) as it emerges from the ribosomes. The SRP-RNC complex is then targeted to the cytoplasmic membrane where it interacts with the SRP receptor FtsY. Interaction with FtsY leads to the transfer of the RNC complex to the Sec translocase for insertion into the membrane, the hydrolysis of GTP by both Ffh and FtsY, and the dissociation of the SRP-FtsY complex into the individual components. This chain is Signal recognition particle protein, found in Escherichia coli O157:H7.